A 235-amino-acid chain; its full sequence is Adapter protein MecA (235 aa).

Basic and acidic residues predominate over residues 113-135 (LRQSDKGDIVKSKVSSSDHKDGS). Residues 113–136 (LRQSDKGDIVKSKVSSSDHKDGSQ) are disordered.

Belongs to the MecA family. In terms of assembly, homodimer.

Functionally, enables the recognition and targeting of unfolded and aggregated proteins to the ClpC protease or to other proteins involved in proteolysis. The chain is Adapter protein MecA from Leuconostoc mesenteroides subsp. mesenteroides (strain ATCC 8293 / DSM 20343 / BCRC 11652 / CCM 1803 / JCM 6124 / NCDO 523 / NBRC 100496 / NCIMB 8023 / NCTC 12954 / NRRL B-1118 / 37Y).